An 87-amino-acid polypeptide reads, in one-letter code: Putative regulatory protein syc0519_c (87 aa).

It belongs to the RemA family.

The protein is Putative regulatory protein syc0519_c of Synechococcus sp. (strain ATCC 27144 / PCC 6301 / SAUG 1402/1) (Anacystis nidulans).